Consider the following 297-residue polypeptide: Urease accessory protein UreD (297 aa).

It belongs to the UreD family. UreD, UreF and UreG form a complex that acts as a GTP-hydrolysis-dependent molecular chaperone, activating the urease apoprotein by helping to assemble the nickel containing metallocenter of UreC. The UreE protein probably delivers the nickel.

It localises to the cytoplasm. Required for maturation of urease via the functional incorporation of the urease nickel metallocenter. In Prochlorococcus marinus subsp. pastoris (strain CCMP1986 / NIES-2087 / MED4), this protein is Urease accessory protein UreD.